The following is a 471-amino-acid chain: L-amino acid dehydrogenase (471 aa).

Glycine 31 lines the Mg(2+) pocket. Residue serine 33 participates in FAD binding. Glycine 34 contacts Mg(2+). Residues glutamate 52, arginine 60, and valine 256 each contribute to the FAD site. A Mg(2+)-binding site is contributed by alanine 283. FAD is bound at residue phenylalanine 453.

The protein belongs to the flavin monoamine oxidase family. FAD serves as cofactor. Mg(2+) is required as a cofactor.

It localises to the cellular thylakoid membrane. It carries out the reaction a plastoquinone + an L-alpha-amino acid + H2O = a plastoquinol + a 2-oxocarboxylate + NH4(+). It catalyses the reaction a plastoquinone + L-arginine + H2O = a plastoquinol + 5-guanidino-2-oxopentanoate + NH4(+). It functions in the pathway amino-acid degradation; L-arginine degradation. Inhibited by Ca(2+) and other cations such as Ni(2+), Co(2+) and Zn(2+). The inhibition by o-phenanthroline and salicylhydroxamic acid suggests the presence of a metal cofactor besides FAD in the enzyme. The L-arginine-stimulated O(2) consumption involving slr0782 is inhibited by inhibitors of the respiratory electron transport chain, such as KCN and 2,5-dibromo-3-methyl-6-isopropyl-p-benzoquinone, which indicates a participation of the cytochrome b6/f complex and of a cytochrome oxidase. L-amino acid dehydrogenase with broad substrate specificity. Catalyzes the oxidative deamination of various L-amino acids, L-Arg and L-Cys being the best substrates in vitro. Likely functions mainly as an L-arginine dehydrogenase in vivo. Probably feeds electrons from L-arginine oxidation and also from the oxidation of other L-amino acids into the respiratory electron transport chain associated to the thylakoid membrane, and does not directly interact with molecular oxygen but donates electrons to the plastoquinone pool. Cannot use D-amino acids as substrates. The chain is L-amino acid dehydrogenase from Synechocystis sp. (strain ATCC 27184 / PCC 6803 / Kazusa).